Consider the following 278-residue polypeptide: Putative transcription factor kapC (278 aa).

Positions Met1–His10 are enriched in pro residues. The disordered stretch occupies residues Met1–Arg121. The segment covering Pro56–Ile68 has biased composition (polar residues). A bZIP domain is found at Pro103–Leu166. The basic motif stretch occupies residues Leu104 to Tyr127. The span at Arg109–Ala119 shows a compositional bias: low complexity. The tract at residues Leu131–Leu162 is leucine-zipper. The disordered stretch occupies residues Val173–Ser278. Positions Pro198–Gln214 are enriched in low complexity. Positions Val215–Asn226 are enriched in polar residues. Residues Gly254–Pro269 show a composition bias toward basic and acidic residues.

Belongs to the bZIP family.

It is found in the nucleus. Putative transcription factor. This Emericella nidulans (strain FGSC A4 / ATCC 38163 / CBS 112.46 / NRRL 194 / M139) (Aspergillus nidulans) protein is Putative transcription factor kapC (kapC).